The primary structure comprises 79 residues: Sulfur carrier protein TusA (79 aa).

Catalysis depends on Cys-17, which acts as the Cysteine persulfide intermediate.

It belongs to the sulfur carrier protein TusA family.

It is found in the cytoplasm. Functionally, sulfur carrier protein which probably makes part of a sulfur-relay system. This Mannheimia succiniciproducens (strain KCTC 0769BP / MBEL55E) protein is Sulfur carrier protein TusA.